The sequence spans 104 residues: Large ribosomal subunit protein bL21 (104 aa).

It belongs to the bacterial ribosomal protein bL21 family. Part of the 50S ribosomal subunit. Contacts protein L20.

In terms of biological role, this protein binds to 23S rRNA in the presence of protein L20. This is Large ribosomal subunit protein bL21 from Streptococcus pyogenes serotype M1.